The sequence spans 45 residues: FREIKGYEYQLYVYASDKLFRADISEDYKTRGRKLLRFNGPVPPP.

In terms of assembly, heterodimer of an A chain and a B chain.

Its function is as follows. Taste-modifying protein; intensely sweet-tasting protein. This Dioscoreophyllum cumminsii (Serendipity berry) protein is Monellin chain A.